The chain runs to 493 residues: Glutamate--tRNA ligase (493 aa).

A 'HIGH' region motif is present at residues 10–20 (PSPTGDPHVGT). The 'KMSKS' region signature appears at 251 to 255 (KLSKR). An ATP-binding site is contributed by Lys254.

This sequence belongs to the class-I aminoacyl-tRNA synthetase family. Glutamate--tRNA ligase type 1 subfamily. In terms of assembly, monomer.

The protein resides in the cytoplasm. The catalysed reaction is tRNA(Glu) + L-glutamate + ATP = L-glutamyl-tRNA(Glu) + AMP + diphosphate. Functionally, catalyzes the attachment of glutamate to tRNA(Glu) in a two-step reaction: glutamate is first activated by ATP to form Glu-AMP and then transferred to the acceptor end of tRNA(Glu). The sequence is that of Glutamate--tRNA ligase from Pseudomonas putida (strain ATCC 47054 / DSM 6125 / CFBP 8728 / NCIMB 11950 / KT2440).